The primary structure comprises 269 residues: Energy-coupling factor transporter ATP-binding protein EcfA1 (269 aa).

The ABC transporter domain occupies 8–242 (IVFKNVSFQY…AEELTTIGLD (235 aa)). 42 to 49 (GHNGSGKS) serves as a coordination point for ATP.

It belongs to the ABC transporter superfamily. Energy-coupling factor EcfA family. In terms of assembly, forms a stable energy-coupling factor (ECF) transporter complex composed of 2 membrane-embedded substrate-binding proteins (S component), 2 ATP-binding proteins (A component) and 2 transmembrane proteins (T component).

It is found in the cell membrane. ATP-binding (A) component of a common energy-coupling factor (ECF) ABC-transporter complex. Unlike classic ABC transporters this ECF transporter provides the energy necessary to transport a number of different substrates. In Staphylococcus aureus (strain MRSA252), this protein is Energy-coupling factor transporter ATP-binding protein EcfA1.